A 67-amino-acid polypeptide reads, in one-letter code: Large ribosomal subunit protein uL29 (67 aa).

It belongs to the universal ribosomal protein uL29 family.

The chain is Large ribosomal subunit protein uL29 from Zymomonas mobilis subsp. mobilis (strain ATCC 31821 / ZM4 / CP4).